We begin with the raw amino-acid sequence, 371 residues long: Queuine tRNA-ribosyltransferase (371 aa).

The Proton acceptor role is filled by D90. Substrate contacts are provided by residues 90 to 94 (DSGGF), D144, Q189, and G215. The RNA binding stretch occupies residues 246–252 (GVGTPEN). D265 serves as the catalytic Nucleophile. Positions 270 to 274 (TRNAR) are RNA binding; important for wobble base 34 recognition. The Zn(2+) site is built by C303, C305, C308, and H334.

It belongs to the queuine tRNA-ribosyltransferase family. As to quaternary structure, homodimer. Within each dimer, one monomer is responsible for RNA recognition and catalysis, while the other monomer binds to the replacement base PreQ1. Zn(2+) is required as a cofactor.

It catalyses the reaction 7-aminomethyl-7-carbaguanine + guanosine(34) in tRNA = 7-aminomethyl-7-carbaguanosine(34) in tRNA + guanine. It participates in tRNA modification; tRNA-queuosine biosynthesis. Catalyzes the base-exchange of a guanine (G) residue with the queuine precursor 7-aminomethyl-7-deazaguanine (PreQ1) at position 34 (anticodon wobble position) in tRNAs with GU(N) anticodons (tRNA-Asp, -Asn, -His and -Tyr). Catalysis occurs through a double-displacement mechanism. The nucleophile active site attacks the C1' of nucleotide 34 to detach the guanine base from the RNA, forming a covalent enzyme-RNA intermediate. The proton acceptor active site deprotonates the incoming PreQ1, allowing a nucleophilic attack on the C1' of the ribose to form the product. After dissociation, two additional enzymatic reactions on the tRNA convert PreQ1 to queuine (Q), resulting in the hypermodified nucleoside queuosine (7-(((4,5-cis-dihydroxy-2-cyclopenten-1-yl)amino)methyl)-7-deazaguanosine). The chain is Queuine tRNA-ribosyltransferase from Helicobacter pylori (strain J99 / ATCC 700824) (Campylobacter pylori J99).